The sequence spans 726 residues: MKKLLVALSLIAGSLTASAQWGRPVDYAAGPGLKDAYKDYFTVGVAVNKFNISDPAQTAIVKKQFNSVTAENAWKPGEIHPKEGVWNFGLADSIANFCRENGIKMRGHCLCWHSQFADWMFTDKKGKPVKKEVFYQRLREHIHTVVNRYKDVVYAWDVVNEAMADDGRPFEFVDGKMVPASPYRQSRHFKLCGDEFIAKAFEFAREADPTGVLMYNDYSCVDEGKRERIYNMVKKMKEAGVPIDGIGMQGHYNIYFPDEEKLEKAINRFSEIVNTIHITELDLRTNTESGGQLMFSRGEAKPQPGYMQTLQEDQYARLFKIFRKHKDVIKNVTFWNLSDKDSWLGVNNHPLPFDENFKAKRSLQIIRDFDAAMDNRKPKEDFVPNPMNQPGQEYPMVNSEGYARFRVEAPDAKSVIVSLGLGGRGGTVLRKDKNGVWTGTTEGPMDPGFHYYHLTIDGGVFNDPGTHNYFGSCRWESGIEIPAKDQDFYAYRKDINHGNIQQVTFWSESTGKMQTANVYLPYGYGKVVKGKQERYPVLYLQHGWGENETSWPVQGKAGLIMDNLIADGKIKPFIVVMAYGLTNDFKFGSIGKFTAEEFEKVLIDELIPTIDKNFLTKADKWNRAMAGLSMGGMETKLITLRRPEMFGYWGLLSGGTYMPEEIKDPKAVKYIFVGCGDKENPEGINKSVEALKAAGFKAEGLVSEGTAHEFLTWRRCLEKMAQSLFK.

An N-terminal signal peptide occupies residues 1 to 19 (MKKLLVALSLIAGSLTASA). The GH10 domain maps to 27–369 (YAAGPGLKDA…KRSLQIIRDF (343 aa)). The Proton donor; for xylanase activity role is filled by E161. E280 (nucleophile; for xylanase activity) is an active-site residue. The interval 370-726 (DAAMDNRKPK…LEKMAQSLFK (357 aa)) is feruloyl esterase. The active-site Nucleophile; for esterase activity is the S629.

This sequence in the N-terminal section; belongs to the glycosyl hydrolase 10 (cellulase F) family. Monomer or homodimer.

The catalysed reaction is Endohydrolysis of (1-&gt;4)-beta-D-xylosidic linkages in xylans.. It carries out the reaction feruloyl-polysaccharide + H2O = ferulate + polysaccharide.. It functions in the pathway glycan degradation; xylan degradation. Functionally, involved in degradation of plant cell wall polysaccharides. Has endo-xylanase activity towards substrates such as oat spelt xylan (OSX), acetylated xylo-oligosaccharides and acetylated xylan, producing primarily xylobiose; cannot hydrolyze xylobiose to xylose. Also has feruloyl esterase activity, releasing ferulic acid from methylferulate, and from the more natural substrates wheat bran, corn fiber, and XOS(FA,Ac), a corn fiber-derived substrate enriched in O-acetyl and ferulic acid esters. Exhibits negligible acetyl esterase activity on sugar acetates. Acts synergistically with Xyl3A to increase the release of xylose from xylan. Does not possess endoglucanase or mannanase activities since it is not able to hydrolyze carboxymethyl cellulose and locust bean gum. This is Endo-1,4-beta-xylanase/feruloyl esterase from Xylanibacter ruminicola (strain ATCC 19189 / DSM 19721 / CIP 105475 / JCM 8958 / 23) (Prevotella ruminicola).